The primary structure comprises 503 residues: Potassium voltage-gated channel subfamily V member 1 (503 aa).

Disordered regions lie at residues 1–20 and 171–192; these read MDLSPRNRPLLDSSSLDSGS and KKDTDDQESQHESEQDFSQGPC. The Cytoplasmic segment spans residues 3–213; it reads LSPRNRPLLD…EKPGSSTAAR (211 aa). A compositionally biased stretch (low complexity) spans 10–20; that stretch reads LLDSSSLDSGS. Positions 171–184 are enriched in basic and acidic residues; the sequence is KKDTDDQESQHESE. The helical transmembrane segment at 214–234 threads the bilayer; that stretch reads IFGVISIIFVAVSIVNMALMS. Residues 235-241 lie on the Extracellular side of the membrane; it reads AELSWLN. The helical transmembrane segment at 242–262 threads the bilayer; sequence LQLLEILEYVCISWFTGEFIL. The Cytoplasmic segment spans residues 263-279; that stretch reads RFLCVKDRCHFLRKVPN. The chain crosses the membrane as a helical span at residues 280–300; that stretch reads IIDLLAILPFYITLLVESLSG. Residues 301–312 lie on the Extracellular side of the membrane; it reads SHTTQELENVGR. The helical; Voltage-sensor transmembrane segment at 313–334 threads the bilayer; that stretch reads LVQVLRLLRALRMLKLGRHSTG. At 335-348 the chain is on the cytoplasmic side; the sequence is LRSLGMTITQCYEE. The helical transmembrane segment at 349 to 369 threads the bilayer; the sequence is VGLLLLFLSVGISIFSTIEYF. A Selectivity filter motif is present at residues 395-400; the sequence is TVGYGD. Residues 410–430 traverse the membrane as a helical segment; that stretch reads IVAFMCILSGILVLALPIAII. The Cytoplasmic segment spans residues 431–503; that stretch reads NDRFSACYFT…RSSGGDDFWF (73 aa).

It belongs to the potassium channel family. V (TC 1.A.1.2) subfamily. Kv8.1/KCNV1 sub-subfamily. In terms of assembly, heteromultimer with KCNB1 and KCNB2. Interacts with KCNC4 and KCND1. In terms of tissue distribution, detected in brain, in neocortex, olfactory tubercle, hippocampus, dentate gyrus, piriform cortex and amygdala. Detected in Purkinje cells and granular cells of the cerebellum, in hippocampal CA4 neurons and neocortex pyramidal cells.

It is found in the cell membrane. Its function is as follows. Potassium channel subunit that does not form functional channels by itself. Modulates KCNB1 and KCNB2 channel activity by shifting the threshold for inactivation to more negative values and by slowing the rate of inactivation. Can down-regulate the channel activity of KCNB1, KCNB2, KCNC4 and KCND1, possibly by trapping them in intracellular membranes. The sequence is that of Potassium voltage-gated channel subfamily V member 1 (Kcnv1) from Rattus norvegicus (Rat).